The sequence spans 910 residues: MAATVEGPELEAAAAAGDASEDSDAGSRALPFLGGNRLSLDLYPGGCQQLLHLCVQQPLQLLQVEFLRLSTHEDPQLLEATLAQLPQSLSCLRSLVLKGGQRRDTLGACLRGALTNLPAGLSGLAHLAHLDLSFNSLETLPACVLQMRGLGALLLSHNCLSELPEALGALPALTFLTVTHNRLQTLPPALGALSTLQRLDLSQNLLDTLPPEIGGLGSLLELNLASNRLQSLPASLAGLRSLRLLVLHSNLLASVPADLARLPLLTRLDLRDNQLRDLPPELLDAPFVRLQGNPLGEASPDAPSSPVAALIPEMPRLFLTSDLDSFPVTPQGCSVTLACGVRLQFPAGATATPITIRYRLLLPEPGLVPLGPHDALLSHVLELQPHGVAFQQDVGLWLLFTPPQARRCREVVVRTRNDNSWGDLETYLEEEAPQRLWAHCQVPHFSWFLVVSRPVSNACLVPPEGTLLCSSGHPGVKVIFPPGATEEPRRVSMQVVRMAGRELQALLGEPEAAVSPLLCLSQSGPPSFLQPVTVQLPLPSGITGLSLDRSRLHLLYWAPPAATWDDITAQVVLELTHLYARFQVTHFSWYWLWYTTKNCVGGLARKAWERLRLHRVNLIALQRRRDPEQVLLQCLPRNKVDATLRRLLERYRGPEPSDTVEMFEGEEFFAAFERGIDVDADRPDCVEGRICFVFYSHLKNVKEVYVTTTLDREAQAVRGQVSFYRGAVPVRVPEEAEAARQRKGADALWMATLPIKLPRLRGSEGPRRGAGLSLAPLNLGDAETGFLTQSNLLSVAGRLGLDWPAVALHLGVSYREVQRIRHEFRDDLDEQIRHMLFSWAERQAGQPGAVGLLVQALEQSDRQDVAEEVRAVLELGRRKYQDSIRRMGLAPKDPALPGSSAPQPPEPAQA.

Positions 1–25 are disordered; sequence MAATVEGPELEAAAAAGDASEDSDA. A2 carries the post-translational modification N-acetylalanine. LRR repeat units follow at residues 126 to 147, 149 to 171, 172 to 194, 195 to 216, 218 to 240, 241 to 263, and 264 to 285; these read HLAH…VLQM, GLGA…GALP, ALTF…GALS, TLQR…IGGL, SLLE…AGLR, SLRL…ARLP, and LLTR…LLDA. 2 positions are modified to phosphoserine: S299 and S305. ZU5 domains follow at residues 322-454 and 455-596; these read DLDS…VSRP and VSNA…WYTT. Peptidase S68 stretches follow at residues 423–452 and 566–594; these read DLET…LVVS and DITA…WLWY. Active-site residues include H444, S446, H586, and S588. Positions 580 to 716 are UPA domain; it reads ARFQVTHFSW…TTTLDREAQA (137 aa). The region spanning 788-873 is the Death domain; that stretch reads TQSNLLSVAG…DVAEEVRAVL (86 aa). The tract at residues 884–910 is disordered; sequence IRRMGLAPKDPALPGSSAPQPPEPAQA.

As to quaternary structure, forms a complex named the PIDDosome with CASP2 and CRADD. Forms a complex with IKBKG and RIPK1. Interacts with FADD and MADD. Post-translationally, undergoes autoproteolytic processing whose extent either directs cells towards survival or apoptotic pathways. Autoproteolytically cleaved into two main fragments PIDD-N and PIDD-C. PIDD-C can be further processed into PIDD-CC, a processing which is enhanced by DNA damage. The cleavage producing PIDD-C is required for translocation of PIDD1 to the nucleus upon DNA damage and activation of NF-kappa-B. PIDD-CC mediates the interaction with CRADD and the cleavage producing PIDD-CC is required for the activation of CASP2. PIDD-N remains associated with PIDD-C and PIDD-CC after cleavage. Ubiquitous.

The protein resides in the cytoplasm. It is found in the nucleus. Functionally, component of the DNA damage/stress response pathway that functions downstream of p53/TP53 and can either promote cell survival or apoptosis. Associated with CRADD and the CASP2 caspase, it forms the PIDDosome a complex that activates CASP2 and triggers apoptosis. Associated with IKBKG and RIPK1, it enhances sumoylation and ubiquitination of IKBKG which is important for activation of the transcription factor NF-kappa-B. This is p53-induced death domain-containing protein 1 from Homo sapiens (Human).